The primary structure comprises 893 residues: Valine--tRNA ligase (893 aa).

Positions 57 to 67 (PNVTGTLHMGH) match the 'HIGH' region motif. The short motif at 545–549 (KMSKS) is the 'KMSKS' region element. Lysine 548 is a binding site for ATP. Positions 821–855 (TSGSVDLEAERKRLEKDLAAAQKELATTEGKLGNE) form a coiled coil.

The protein belongs to the class-I aminoacyl-tRNA synthetase family. ValS type 1 subfamily. Monomer.

The protein resides in the cytoplasm. It catalyses the reaction tRNA(Val) + L-valine + ATP = L-valyl-tRNA(Val) + AMP + diphosphate. Functionally, catalyzes the attachment of valine to tRNA(Val). As ValRS can inadvertently accommodate and process structurally similar amino acids such as threonine, to avoid such errors, it has a 'posttransfer' editing activity that hydrolyzes mischarged Thr-tRNA(Val) in a tRNA-dependent manner. The polypeptide is Valine--tRNA ligase (Nocardia farcinica (strain IFM 10152)).